The following is a 571-amino-acid chain: Phosphomethylpyrimidine synthase (571 aa).

Substrate-binding positions include asparagine 201, methionine 230, tyrosine 259, histidine 295, 315–317, 356–359, and glutamate 395; these read SRG and DALR. Residue histidine 399 coordinates Zn(2+). Residue tyrosine 422 coordinates substrate. Residue histidine 463 participates in Zn(2+) binding. Cysteine 545, cysteine 548, and cysteine 553 together coordinate [4Fe-4S] cluster.

This sequence belongs to the ThiC family. Requires [4Fe-4S] cluster as cofactor.

It carries out the reaction 5-amino-1-(5-phospho-beta-D-ribosyl)imidazole + S-adenosyl-L-methionine = 4-amino-2-methyl-5-(phosphooxymethyl)pyrimidine + CO + 5'-deoxyadenosine + formate + L-methionine + 3 H(+). Its pathway is cofactor biosynthesis; thiamine diphosphate biosynthesis. Functionally, catalyzes the synthesis of the hydroxymethylpyrimidine phosphate (HMP-P) moiety of thiamine from aminoimidazole ribotide (AIR) in a radical S-adenosyl-L-methionine (SAM)-dependent reaction. The sequence is that of Phosphomethylpyrimidine synthase from Chlorobium phaeovibrioides (strain DSM 265 / 1930) (Prosthecochloris vibrioformis (strain DSM 265)).